The following is a 179-amino-acid chain: Large ribosomal subunit protein uL6 (179 aa).

The protein belongs to the universal ribosomal protein uL6 family. As to quaternary structure, part of the 50S ribosomal subunit.

In terms of biological role, this protein binds to the 23S rRNA, and is important in its secondary structure. It is located near the subunit interface in the base of the L7/L12 stalk, and near the tRNA binding site of the peptidyltransferase center. This chain is Large ribosomal subunit protein uL6, found in Prochlorococcus marinus (strain MIT 9313).